Reading from the N-terminus, the 425-residue chain is MKRKLIAAIGIAGMMVSIAACGGDSDDDGKKAGADGYAGETLTVWVMDGSSPDDWQADLAKDFEAKTKAKVKFEIQKWNGIQQKLTTALSEENPPDVFEIGNTQTPAYAKTGGLADLSDLKGEIGTDWSESLNKSAVFDGKQYAAPWFVVNRVVVYNKKIWADAGIKELPKTRDEFYNDLKTIGEKTDAEPIYLPGQNWYHFVGLVIGEGGELVKKDGDKYVSNLADPKVAAATETYKKFQALSKAPKDKDEATPQQGEIFAKGKTGSFIGMGWEGATAIATNPAIEKDLGYFTIPGPTADKPEGVFLGGSNLAVAAGSKKQDLAKEFLKLALSDKYEGGLAKANGVIPNKEALQSNLKGNAAAEAAAPAAGTGDTTPLIPEWAAVENDPNPIKTYLTAVMKGKSPADAAKQVEGEFNKRLAQQQ.

The first 20 residues, 1 to 20 (MKRKLIAAIGIAGMMVSIAA), serve as a signal peptide directing secretion. Cys21 is lipidated: N-palmitoyl cysteine. A lipid anchor (S-diacylglycerol cysteine) is attached at Cys21.

The protein belongs to the bacterial solute-binding protein 1 family. As to quaternary structure, the complex is composed of two ATP-binding proteins (MsiK), two transmembrane proteins (DasB and DasC) and a solute-binding protein (DasA).

It is found in the cell membrane. Its function is as follows. Part of the ABC transporter complex DasABC-MsiK involved in N,N'-diacetylchitobiose ((GlcNAc)2) uptake. Binds specifically to (GlcNAc)2. Can also bind to GlcNAc, (GlcNAc)3, (GlcNAc)4 and (GlcNAc)5, but it exhibits the highest affinity for (GlcNAc)2. Involved in the control of morphological differentiation. This is Diacetylchitobiose binding protein DasA from Streptomyces coelicolor (strain ATCC BAA-471 / A3(2) / M145).